The chain runs to 933 residues: Isoleucine--tRNA ligase (933 aa).

Residues 57-67 (PYANGNIHVGH) carry the 'HIGH' region motif. L-isoleucyl-5'-AMP is bound at residue Glu554. The short motif at 595–599 (KMSKS) is the 'KMSKS' region element. ATP is bound at residue Lys598.

This sequence belongs to the class-I aminoacyl-tRNA synthetase family. IleS type 1 subfamily. In terms of assembly, monomer.

It is found in the cytoplasm. It catalyses the reaction tRNA(Ile) + L-isoleucine + ATP = L-isoleucyl-tRNA(Ile) + AMP + diphosphate. Catalyzes the attachment of isoleucine to tRNA(Ile). As IleRS can inadvertently accommodate and process structurally similar amino acids such as valine, to avoid such errors it has two additional distinct tRNA(Ile)-dependent editing activities. One activity is designated as 'pretransfer' editing and involves the hydrolysis of activated Val-AMP. The other activity is designated 'posttransfer' editing and involves deacylation of mischarged Val-tRNA(Ile). The sequence is that of Isoleucine--tRNA ligase from Streptococcus pyogenes serotype M3 (strain ATCC BAA-595 / MGAS315).